A 94-amino-acid chain; its full sequence is MTKSDLIEQLAASRMHMPAKDVEAAIKEILEQMASTLQNGDRIEIRGFGSFSLHYRAPRVGRNPKTGDKVELTGKYVPHFKPGKELRERVNIAE.

This sequence belongs to the bacterial histone-like protein family. In terms of assembly, heterodimer of an alpha and a beta chain.

In terms of biological role, this protein is one of the two subunits of integration host factor, a specific DNA-binding protein that functions in genetic recombination as well as in transcriptional and translational control. The sequence is that of Integration host factor subunit beta from Aeromonas hydrophila subsp. hydrophila (strain ATCC 7966 / DSM 30187 / BCRC 13018 / CCUG 14551 / JCM 1027 / KCTC 2358 / NCIMB 9240 / NCTC 8049).